We begin with the raw amino-acid sequence, 350 residues long: 3-methylornithine synthase (350 aa).

The Radical SAM core domain maps to 57–279 (NRVFLNCFIY…PKRLIPASLD (223 aa)). 2 residues coordinate [4Fe-4S] cluster: cysteine 71 and cysteine 75. Phenylalanine 77 contributes to the S-adenosyl-L-methionine binding site. Position 78 (cysteine 78) interacts with [4Fe-4S] cluster. Residues aspartate 112, serine 146, and tyrosine 169 each coordinate (3R)-3-methyl-D-ornithine. The S-adenosyl-L-methionine site is built by glutamate 171, arginine 182, and arginine 190. Residue arginine 235 coordinates (3R)-3-methyl-D-ornithine. Leucine 240 and glutamine 242 together coordinate S-adenosyl-L-methionine. (3R)-3-methyl-D-ornithine contacts are provided by serine 277, threonine 298, and serine 299.

It belongs to the radical SAM superfamily. PylB family. It depends on [4Fe-4S] cluster as a cofactor. S-adenosyl-L-methionine is required as a cofactor.

It carries out the reaction L-lysine = (3R)-3-methyl-D-ornithine. The protein operates within amino-acid biosynthesis; L-pyrrolysine biosynthesis. Catalyzes the isomerization of L-lysine to (3R)-3-methyl-D-ornithine via a radical-based mechanism, a step in the biosynthesis pathway of pyrrolysine. Also catalyzes the reverse reaction in vitro, converting (3R)-3-methyl-D-ornithine into L-lysine. This is 3-methylornithine synthase from Methanosarcina barkeri (strain Fusaro / DSM 804).